Reading from the N-terminus, the 562-residue chain is MSEELAQGPKESPPAPRAGPREVWKKGGRLLSVLLAVNVLLLACTLISGGAFNKVAVYDTDVFALLTAMMLLATLWILFYLLRTVRCPCAVPYRDAHAGPIWLRGGLVLFGICTLIMDVFKTGYYSSFFECQSAIKILHPLIQAVFVIIQTYFLWVSAKDCVHVHLDLTWCGLMFTLTTNLAIWMAAVVDESVHQSHSYSSSHSNASHARLISDQHADNPVGGDSCLCSTAVCQIFQQGYFYLYPFNIEYSLFASTMLYVMWKNVGRFLASTPGHSHTPTPVSLFRETFFAGPVLGLLLFVVGLAVFIIYEVQVSGDGSRTRQALVIYYSFNIVCLGLTTLVSLSGSIIYRFDRRAMDHHKNPTRTLDVALLMGAALGQYAISYYSIVAVVAGTPQDLLAGLNLTHALLMIAQHTFQNMFIIESLHRGPPGAEPHSTHPKEPCQDLTFTNLDALHTLSACPPNPGLVSPSPSDQREAVAIVSTPRSQWRRQCLKDISLFLLLCNVILWIMPAFGARPHFSNTVEVDFYGYSLWAVIVNICLPFGIFYRMHAVSSLLEVYVLS.

Residues 1-20 are disordered; that stretch reads MSEELAQGPKESPPAPRAGP. 12 consecutive transmembrane segments (helical) span residues 30 to 50, 62 to 82, 100 to 120, 137 to 157, 169 to 189, 241 to 261, 289 to 309, 324 to 344, 371 to 391, 402 to 422, 495 to 515, and 527 to 547; these read LLSVLLAVNVLLLACTLISGG, VFALLTAMMLLATLWILFYLL, PIWLRGGLVLFGICTLIMDVF, ILHPLIQAVFVIIQTYFLWVS, TWCGLMFTLTTNLAIWMAAVV, FYLYPFNIEYSLFASTMLYVM, FFAGPVLGLLLFVVGLAVFII, ALVIYYSFNIVCLGLTTLVSL, LLMGAALGQYAISYYSIVAVV, LNLTHALLMIAQHTFQNMFII, DISLFLLLCNVILWIMPAFGA, and FYGYSLWAVIVNICLPFGIFY.

Belongs to the otopetrin family.

It is found in the cell membrane. It catalyses the reaction H(+)(in) = H(+)(out). Its activity is regulated as follows. Actives at neutral and alkaline extracellular pH, acid extracellular pH appears to inhibit the channel. Insensitive to activation by Zn(2+). Functionally, proton-selective ion channel open at neutral pH. Actives at neutral and alkaline extracellular pH, likely participates in some alkali-related physiological activities. The chain is Proton channel OTOP2 from Homo sapiens (Human).